The following is a 228-amino-acid chain: Octanoyltransferase (228 aa).

The BPL/LPL catalytic domain maps to 31-212; sequence GETDGILILL…KFSEVFGIHF (182 aa). Residues 76-83, 143-145, and 156-158 each bind substrate; these read RGGKITFH, AIG, and GIA. Cysteine 174 acts as the Acyl-thioester intermediate in catalysis.

This sequence belongs to the LipB family.

It is found in the cytoplasm. The catalysed reaction is octanoyl-[ACP] + L-lysyl-[protein] = N(6)-octanoyl-L-lysyl-[protein] + holo-[ACP] + H(+). Its pathway is protein modification; protein lipoylation via endogenous pathway; protein N(6)-(lipoyl)lysine from octanoyl-[acyl-carrier-protein]: step 1/2. Functionally, catalyzes the transfer of endogenously produced octanoic acid from octanoyl-acyl-carrier-protein onto the lipoyl domains of lipoate-dependent enzymes. Lipoyl-ACP can also act as a substrate although octanoyl-ACP is likely to be the physiological substrate. In Thermoanaerobacter pseudethanolicus (strain ATCC 33223 / 39E) (Clostridium thermohydrosulfuricum), this protein is Octanoyltransferase.